Here is a 987-residue protein sequence, read N- to C-terminus: AP3-complex subunit beta-A (987 aa).

A disordered region spans residues 586–662; it reads QDQLSDLDKQ…ISETSVSADQ (77 aa). The span at 603–613 shows a compositional bias: acidic residues; sequence DGSEESSETGD. The span at 614 to 631 shows a compositional bias: low complexity; the sequence is ENGSSDYDSESSNGSDFS.

The protein belongs to the adaptor complexes large subunit family. Adaptor protein complex 3 (AP-3) is a heterotetramer composed of two large adaptins (delta-type subunit and beta-type subunit), a medium adaptin (mu-type subunit) and a small adaptin (sigma-type subunit).

The protein localises to the cytoplasm. It localises to the golgi apparatus. It is found in the cytoplasmic vesicle membrane. Its function is as follows. Part of the AP-3 complex, an adaptor-related complex which seems to be clathrin-associated. The complex is associated with the Golgi region as well as more peripheral structures. It facilitates the budding of vesicles from the Golgi membrane and may be directly involved in trafficking to the vacuole. It also function in maintaining the identity of lytic vacuoles and in regulating the transition between storage and lytic vacuoles. This Arabidopsis thaliana (Mouse-ear cress) protein is AP3-complex subunit beta-A (AP3BA).